The following is a 290-amino-acid chain: Bifunctional protein FolD (290 aa).

NADP(+) is bound by residues Gly-174–Ser-176, Ile-199, and Ile-240.

The protein belongs to the tetrahydrofolate dehydrogenase/cyclohydrolase family. Homodimer.

It catalyses the reaction (6R)-5,10-methylene-5,6,7,8-tetrahydrofolate + NADP(+) = (6R)-5,10-methenyltetrahydrofolate + NADPH. The catalysed reaction is (6R)-5,10-methenyltetrahydrofolate + H2O = (6R)-10-formyltetrahydrofolate + H(+). The protein operates within one-carbon metabolism; tetrahydrofolate interconversion. Its function is as follows. Catalyzes the oxidation of 5,10-methylenetetrahydrofolate to 5,10-methenyltetrahydrofolate and then the hydrolysis of 5,10-methenyltetrahydrofolate to 10-formyltetrahydrofolate. This Methanosarcina acetivorans (strain ATCC 35395 / DSM 2834 / JCM 12185 / C2A) protein is Bifunctional protein FolD.